A 209-amino-acid chain; its full sequence is Kynurenine formamidase (209 aa).

Position 18 (Phe-18) interacts with substrate. Residues His-48, His-52, and Asp-54 each coordinate Zn(2+). His-58 functions as the Proton donor/acceptor in the catalytic mechanism. Residues His-160 and Glu-172 each contribute to the Zn(2+) site.

It belongs to the Cyclase 1 superfamily. KynB family. As to quaternary structure, homodimer. It depends on Zn(2+) as a cofactor.

The catalysed reaction is N-formyl-L-kynurenine + H2O = L-kynurenine + formate + H(+). Its pathway is amino-acid degradation; L-tryptophan degradation via kynurenine pathway; L-kynurenine from L-tryptophan: step 2/2. Its function is as follows. Catalyzes the hydrolysis of N-formyl-L-kynurenine to L-kynurenine, the second step in the kynurenine pathway of tryptophan degradation. This chain is Kynurenine formamidase, found in Bordetella avium (strain 197N).